The following is a 459-amino-acid chain: Cell division protein FtsZ (459 aa).

Residues 25–29 (GAGSN), 112–114 (GTG), Glu143, Arg147, and Asp191 contribute to the GTP site. Disordered regions lie at residues 383–405 (DQAP…DAGE) and 427–459 (IPER…KKRD).

This sequence belongs to the FtsZ family. Homodimer. Polymerizes to form a dynamic ring structure in a strictly GTP-dependent manner. Interacts directly with several other division proteins.

Its subcellular location is the cytoplasm. Essential cell division protein that forms a contractile ring structure (Z ring) at the future cell division site. The regulation of the ring assembly controls the timing and the location of cell division. One of the functions of the FtsZ ring is to recruit other cell division proteins to the septum to produce a new cell wall between the dividing cells. Binds GTP and shows GTPase activity. This is Cell division protein FtsZ from Rickettsia bellii (strain RML369-C).